A 474-amino-acid chain; its full sequence is Lactococcin A secretion protein LcnD (474 aa).

Over 1 to 21 (MFDKKLLESSELYDKRYRNFS) the chain is Cytoplasmic. A helical membrane pass occupies residues 22-44 (TLIILPLFILLVGGVIFTFFAHK). Residues 45–474 (ELTVISTGSI…LDKIMGRGNQ (430 aa)) are Extracellular-facing.

Belongs to the membrane fusion protein (MFP) (TC 8.A.1) family.

The protein localises to the cell membrane. In terms of biological role, involved in the secretion of lactococcin A. This Lactococcus lactis subsp. cremoris (Streptococcus cremoris) protein is Lactococcin A secretion protein LcnD (lcnD).